We begin with the raw amino-acid sequence, 284 residues long: Proline-rich protein 32 (284 aa).

Disordered stretches follow at residues 59-80 (RPPF…APRH), 97-119 (EINS…NMSQ), and 143-171 (SGNN…RGPP).

This is Proline-rich protein 32 (Prr32) from Mus musculus (Mouse).